We begin with the raw amino-acid sequence, 734 residues long: Photosystem I P700 chlorophyll a apoprotein A2 (734 aa).

8 helical membrane-spanning segments follow: residues 46-69 (IFASHFGQLAIIFLWTSGNLFHVA), 135-158 (LYTGALFLLFLSAISLIAGWLHLQ), 175-199 (LNHHLSGLFGVSSLAWTGHLVHVAI), 273-291 (IAHHHLAIAFLFLVAGHMY), 330-353 (IHFQLGLALASLGVITSLVAQHMY), 369-395 (AALYTHHQYIAGFIMTGAFAHGAIFFI), 417-439 (AIKSHLSWVSLFLGFHTLGLYVH), and 517-535 (FLVHHAIALGLHTTTLILV). [4Fe-4S] cluster-binding residues include C559 and C568. A run of 2 helical transmembrane segments spans residues 575–596 (AFYLAVFWMLNTIGWVTFYWHW) and 643–665 (LSVWAWMFLFGHLVWATGFMFLI). Chlorophyll a-binding residues include H654, M662, and Y670. W671 serves as a coordination point for phylloquinone. Residues 707 to 727 (LVGLAHFSVGYIFTYAAFLIA) form a helical membrane-spanning segment.

This sequence belongs to the PsaA/PsaB family. In terms of assembly, the PsaA/B heterodimer binds the P700 chlorophyll special pair and subsequent electron acceptors. PSI consists of a core antenna complex that captures photons, and an electron transfer chain that converts photonic excitation into a charge separation. The eukaryotic PSI reaction center is composed of at least 11 subunits. The cofactor is P700 is a chlorophyll a/chlorophyll a' dimer, A0 is one or more chlorophyll a, A1 is one or both phylloquinones and FX is a shared 4Fe-4S iron-sulfur center..

Its subcellular location is the plastid. It is found in the chloroplast thylakoid membrane. The catalysed reaction is reduced [plastocyanin] + hnu + oxidized [2Fe-2S]-[ferredoxin] = oxidized [plastocyanin] + reduced [2Fe-2S]-[ferredoxin]. Its function is as follows. PsaA and PsaB bind P700, the primary electron donor of photosystem I (PSI), as well as the electron acceptors A0, A1 and FX. PSI is a plastocyanin-ferredoxin oxidoreductase, converting photonic excitation into a charge separation, which transfers an electron from the donor P700 chlorophyll pair to the spectroscopically characterized acceptors A0, A1, FX, FA and FB in turn. Oxidized P700 is reduced on the lumenal side of the thylakoid membrane by plastocyanin. The protein is Photosystem I P700 chlorophyll a apoprotein A2 of Drimys granadensis.